The chain runs to 814 residues: Rho GTPase-activating protein 26 (814 aa).

The BAR domain maps to 7–262 (EFSDCCLDSP…MKENPLEHKT (256 aa)). Residues 265 to 369 (PYTMEGYLYV…WMEAMDGREP (105 aa)) form the PH domain. The Rho-GAP domain occupies 383–568 (AQLDSIGFSI…ILIENHEKIF (186 aa)). Disordered stretches follow at residues 584–618 (SRKK…QRNS) and 638–696 (SSSL…SSDS). 2 stretches are compositionally biased toward low complexity: residues 591-600 (SKPPSCSKRP) and 638-661 (SSSL…SRPS). Residues 662–672 (SLPPNPSPTSP) are compositionally biased toward pro residues. S668 bears the Phosphoserine mark. A Phosphothreonine modification is found at T670. S671 is modified (phosphoserine). Residues 673 to 696 (LSPSWPMFSAPSSPMPTSSTSSDS) show a composition bias toward low complexity. Residues 756-814 (TPFRKAKALYACQAEHDSELSFTAGTVFDNVHPSQEPGWLEGTLNGKTGLIPENYVEFL) form the SH3 domain.

Interacts with NYAP1, NYAP2 and MYO16. Interacts with MICAL1 and WDR44. Binds to the C-terminus of PTK2/FAK1. Post-translationally, phosphorylated in a PINK1-dependent fashion promoting retrograde mitochondrial trafficking and clustering.

Its subcellular location is the cell junction. It localises to the focal adhesion. The protein resides in the cytoplasm. It is found in the cytoskeleton. The protein localises to the endosome membrane. In terms of biological role, GTPase-activating protein for RHOA and CDC42. Facilitates mitochondrial quality control by promoting Parkin-mediated recruitment of autophagosomes to damaged mitochondria. Associates with MICAL1 on the endosomal membrane to promote Rab8-Rab10-dependent tubule extension. After dissociation of MICAL1, recruits WDR44 which connects the endoplasmic reticulum (ER) with the endosomal tubule, thereby participating in the export of a subset of neosynthesized proteins. In Mus musculus (Mouse), this protein is Rho GTPase-activating protein 26 (Arhgap26).